Consider the following 328-residue polypeptide: uncharacterized protein (328 aa).

A disordered region spans residues 1-22 (MPVKPNQPRPSTKQDPSSGASR). Residues 9 to 21 (RPSTKQDPSSGAS) are compositionally biased toward polar residues. Helical transmembrane passes span 66-86 (FSFL…GFVL), 126-146 (TVGL…IGNL), 176-196 (FLSL…TSVA), 221-241 (LIAL…ILWV), 255-275 (GTLM…VALP), and 290-310 (IGLM…AAWI).

It to E.coli YhjD.

Its subcellular location is the cell inner membrane. This is an uncharacterized protein from Dickeya dadantii (strain 3937) (Erwinia chrysanthemi (strain 3937)).